The primary structure comprises 151 residues: Large-conductance mechanosensitive channel (151 aa).

A run of 3 helical transmembrane segments spans residues 14 to 34, 38 to 58, and 86 to 106; these read VVDMAVGIIVGGAFGTIVNTL, VLMPPLGLLIGGVDFTNLYLI, and GLFLNSVISFLIMAFAVFLLV.

It belongs to the MscL family. As to quaternary structure, homopentamer.

The protein localises to the cell inner membrane. Functionally, channel that opens in response to stretch forces in the membrane lipid bilayer. May participate in the regulation of osmotic pressure changes within the cell. In Pelodictyon phaeoclathratiforme (strain DSM 5477 / BU-1), this protein is Large-conductance mechanosensitive channel.